The following is a 445-amino-acid chain: Glucose-6-phosphate isomerase (445 aa).

Glu-287 functions as the Proton donor in the catalytic mechanism. Active-site residues include His-308 and Lys-422.

This sequence belongs to the GPI family.

It localises to the cytoplasm. It carries out the reaction alpha-D-glucose 6-phosphate = beta-D-fructose 6-phosphate. The protein operates within carbohydrate biosynthesis; gluconeogenesis. Its pathway is carbohydrate degradation; glycolysis; D-glyceraldehyde 3-phosphate and glycerone phosphate from D-glucose: step 2/4. Functionally, catalyzes the reversible isomerization of glucose-6-phosphate to fructose-6-phosphate. The polypeptide is Glucose-6-phosphate isomerase (Bacteroides thetaiotaomicron (strain ATCC 29148 / DSM 2079 / JCM 5827 / CCUG 10774 / NCTC 10582 / VPI-5482 / E50)).